A 264-amino-acid chain; its full sequence is MNTLGHRARKRFGQHFLHDKGVIERLLRAINPQLNDLMVEIGPGQGALTLPLLHCLGHLEAIELDRDLAAYLVERCASEGNLRLHNVDSLTFDFRTLAHENRRLRVVGNLPYNISTPLLFHLLGQIGILEDMHFMLQREVVTRLAAKPGGKDYGRLSVMVQFYCEVEPLFTVKSGAFVPPPKVDSMVVRLIPHRPSLAPNISHGALNRVVSQAFSQRRKTLANALKGLLSSAELIALGIDPRQRPETISLEDYLALTRYWLKAQ.

Residues His15, Leu17, Gly42, Glu63, Asp88, and Asn109 each coordinate S-adenosyl-L-methionine.

The protein belongs to the class I-like SAM-binding methyltransferase superfamily. rRNA adenine N(6)-methyltransferase family. RsmA subfamily.

Its subcellular location is the cytoplasm. It carries out the reaction adenosine(1518)/adenosine(1519) in 16S rRNA + 4 S-adenosyl-L-methionine = N(6)-dimethyladenosine(1518)/N(6)-dimethyladenosine(1519) in 16S rRNA + 4 S-adenosyl-L-homocysteine + 4 H(+). Functionally, specifically dimethylates two adjacent adenosines (A1518 and A1519) in the loop of a conserved hairpin near the 3'-end of 16S rRNA in the 30S particle. May play a critical role in biogenesis of 30S subunits. This Nitrosococcus oceani (strain ATCC 19707 / BCRC 17464 / JCM 30415 / NCIMB 11848 / C-107) protein is Ribosomal RNA small subunit methyltransferase A.